The sequence spans 777 residues: DISP complex protein LRCH3 (777 aa).

LRR repeat units follow at residues 56–79 (AAVT…AANH), 81–104 (LTDT…ACHF), 105–127 (VSLE…ILNL), 128–150 (QALT…LCNL), 152–172 (LKVL…IGHL), 173–195 (RHLM…IGNL), 196–218 (EALR…LAEL), 220–239 (LIRL…CYRN), 240–264 (LRHL…CIKG), and 266–290 (VHIF…DRRP). The mediates interaction with DOCK7 stretch occupies residues 56–290 (AAVTGVLSLS…PDLPDYDRRP (235 aa)). Serine 324, serine 415, and serine 419 each carry phosphoserine. Positions 382–648 (TAEEEEAEVR…DSTDSITGQN (267 aa)) are mediates direct interaction with MYO6. Positions 568 to 590 (FTPLKSDDRPNALLSSPATETVH) are disordered. Phosphoserine occurs at positions 611 and 628. Residues 621-653 (ETNKGHASPLPPSAAPTTDSTDSITGQNSRQRE) form a disordered region. Over residues 635-645 (APTTDSTDSIT) the composition is skewed to low complexity. The region spanning 652 to 765 (REEELELIDQ…VTVQALLELA (114 aa)) is the Calponin-homology (CH) domain.

Component of the DOCK7-induced septin displacement/DISP complex, at least composed of DOCK7, LRCH3 and MYO6.

The protein resides in the cytoplasm. In terms of biological role, as part of the DISP complex, may regulate the association of septins with actin and thereby regulate the actin cytoskeleton. This Homo sapiens (Human) protein is DISP complex protein LRCH3.